A 392-amino-acid chain; its full sequence is Formate-dependent phosphoribosylglycinamide formyltransferase (392 aa).

Residues 22 to 23 (EL) and Glu-82 contribute to the N(1)-(5-phospho-beta-D-ribosyl)glycinamide site. Residues Arg-114, Lys-155, 160 to 165 (SSGKGQ), 195 to 198 (EGVV), and Glu-203 each bind ATP. Residues 119–308 (RLAAEELGLP…EFALHVRAFL (190 aa)) enclose the ATP-grasp domain. 2 residues coordinate Mg(2+): Glu-267 and Glu-279. N(1)-(5-phospho-beta-D-ribosyl)glycinamide is bound by residues Asp-286, Lys-355, and 362-363 (RR).

The protein belongs to the PurK/PurT family. Homodimer.

It catalyses the reaction N(1)-(5-phospho-beta-D-ribosyl)glycinamide + formate + ATP = N(2)-formyl-N(1)-(5-phospho-beta-D-ribosyl)glycinamide + ADP + phosphate + H(+). It participates in purine metabolism; IMP biosynthesis via de novo pathway; N(2)-formyl-N(1)-(5-phospho-D-ribosyl)glycinamide from N(1)-(5-phospho-D-ribosyl)glycinamide (formate route): step 1/1. Functionally, involved in the de novo purine biosynthesis. Catalyzes the transfer of formate to 5-phospho-ribosyl-glycinamide (GAR), producing 5-phospho-ribosyl-N-formylglycinamide (FGAR). Formate is provided by PurU via hydrolysis of 10-formyl-tetrahydrofolate. This Salmonella arizonae (strain ATCC BAA-731 / CDC346-86 / RSK2980) protein is Formate-dependent phosphoribosylglycinamide formyltransferase.